A 221-amino-acid polypeptide reads, in one-letter code: Small ribosomal subunit protein uS3 (221 aa).

In terms of domain architecture, KH type-2 spans 39 to 108 (IRKFVKKRSY…NVIINIVEVK (70 aa)).

This sequence belongs to the universal ribosomal protein uS3 family. In terms of assembly, part of the 30S ribosomal subunit. Forms a tight complex with proteins S10 and S14.

In terms of biological role, binds the lower part of the 30S subunit head. Binds mRNA in the 70S ribosome, positioning it for translation. In Clostridium novyi (strain NT), this protein is Small ribosomal subunit protein uS3.